The following is a 375-amino-acid chain: Terpene cyclase braA (375 aa).

Residues aspartate 116, asparagine 264, and serine 268 each coordinate Mg(2+). The D(D/E)XX(D/E) motif motif lies at 116 to 120 (DDEID). Residues 264–272 (NDVLSLQKE) carry the NSE motif motif. The short motif at 348–355 (WSYSCERY) is the WxxxxxRY motif element. The (2E,6E)-farnesyl diphosphate site is built by arginine 354 and tyrosine 355.

It belongs to the terpene synthase family. Homodimer. Mg(2+) is required as a cofactor.

It carries out the reaction (2E,6E)-farnesyl diphosphate + H2O = trichobrasilenol + diphosphate. It functions in the pathway secondary metabolite biosynthesis. Functionally, terpene cyclase; part of the gene cluster that mediates the biosynthesis of the brasilane terpene glycosides brasilane D and E. The biosynthesis starts with the activity of the terpene cyclase braA that converts farnesyl pyrophosphate into the sesquiterpene alcohol trichobrasilenol. Subsequently, trichobrasilenol is glycosylated by the O-glycosyltransferase braB putatively using UDP-GlcNAc as sugar donor to yield brasilane A. The latter then undergoes two rounds of oxidation performed by the cytochrome P450 monooxygenase braC. In the first round braC hydroxylates C-12 forming brasilane D, which serves as substrate in the second round to establish the epoxide at the bond between C-5 and C-10 and oxidize the alcohol at C-12 to an aldehyde leading to the final product brasilane E. This chain is Terpene cyclase braA, found in Annulohypoxylon truncatum (Hypoxylon truncatum).